Consider the following 357-residue polypeptide: Histidine biosynthesis bifunctional protein HisB (357 aa).

Residues 1–168 (MTPILFIDRD…GIAHALADAP (168 aa)) are histidinol-phosphatase. Asp-8 acts as the Nucleophile in catalysis. The Mg(2+) site is built by Asp-8, Asp-10, and Asp-128. The Proton donor role is filled by Asp-10. The tract at residues 169–357 (RIAVVQRDTK…TALPTTKGAL (189 aa)) is imidazoleglycerol-phosphate dehydratase.

The protein in the N-terminal section; belongs to the histidinol-phosphatase family. This sequence in the C-terminal section; belongs to the imidazoleglycerol-phosphate dehydratase family. It depends on Mg(2+) as a cofactor.

The protein resides in the cytoplasm. It carries out the reaction D-erythro-1-(imidazol-4-yl)glycerol 3-phosphate = 3-(imidazol-4-yl)-2-oxopropyl phosphate + H2O. The catalysed reaction is L-histidinol phosphate + H2O = L-histidinol + phosphate. The protein operates within amino-acid biosynthesis; L-histidine biosynthesis; L-histidine from 5-phospho-alpha-D-ribose 1-diphosphate: step 6/9. It functions in the pathway amino-acid biosynthesis; L-histidine biosynthesis; L-histidine from 5-phospho-alpha-D-ribose 1-diphosphate: step 8/9. This is Histidine biosynthesis bifunctional protein HisB from Stenotrophomonas maltophilia (strain R551-3).